Reading from the N-terminus, the 60-residue chain is Mastoparan-A (60 aa).

An N-terminal signal peptide occupies residues 1–27 (MKNTILILFTAFIALLGFFGMSAEALA). 4 AXPX repeats span residues 27–30 (ADPI), 31–34 (ADPL), 35–38 (AGPN), and 41–43 (ADP). A propeptide spanning residues 28-45 (DPIADPLAGPNAEADPEA) is cleaved from the precursor. Ile59 carries the post-translational modification Isoleucine amide.

It belongs to the MCD family. Mastoparan subfamily. Expressed by the venom gland.

The protein localises to the secreted. Its subcellular location is the target cell membrane. In terms of biological role, antimicrobial and mast cell degranulating peptide. Has broad spectrum antibacterial activity against both Gram-positive and Gram-negative bacteria (S.aureus MIC=32-64 ug/ml, S.xylosus MIC=2 ug/ml, S.alactolyticus MIC=12 ug/ml, C.koseri MIC=4 ug/ml, E.coli MIC=8 ug/ml, K.pneumoniae MIC=32 ug/ml, P.aerugiosa MIC=192 ug/ml, S.choleraesuis MIC=32 ug/ml, S.typhimurium MIC=32 ug/ml, V.parahamelytics MIC=16 ug/ml). Affects membrane permeability of E.coli. Shows hemolytic activities on sheep, chicken and human erythrocytes. Its mast cell degranulation activity may be related to the activation of G-protein coupled receptors in mast cells as well as interaction with other proteins located in cell endosomal membranes in the mast cells. This Vespa analis (Yellow-vented hornet) protein is Mastoparan-A.